Here is a 538-residue protein sequence, read N- to C-terminus: Atos homolog protein B (538 aa).

Disordered stretches follow at residues 1-99 (MRHV…PSTV), 165-185 (QGGQ…QLHT), and 199-270 (KSPV…GTLG). The segment covering 227 to 238 (HTPPGPGPPGPC) has biased composition (pro residues). A phosphoserine mark is found at serine 254 and serine 255. The segment at 348–430 (LLGNFEESLL…VPKVGTIQVT (83 aa)) is required for macropage invasion. A transactivation domain 1 (TAD1) region spans residues 436-444 (QTVVKMFLV).

The protein belongs to the ATOS family.

Its subcellular location is the nucleus. In terms of biological role, transcription regulator that syncronizes transcriptional and translational programs to promote macrophage invasion of tissues. The polypeptide is Atos homolog protein B (Mus musculus (Mouse)).